Reading from the N-terminus, the 423-residue chain is Mannose-6-phosphate isomerase (423 aa).

Alanine 2 carries the post-translational modification N-acetylalanine. Residues serine 102 and serine 108 each carry the phosphoserine modification. Residues glutamine 110, histidine 112, glutamate 137, and histidine 276 each coordinate Zn(2+). The active site involves arginine 295.

It belongs to the mannose-6-phosphate isomerase type 1 family. The cofactor is Zn(2+). Expressed in all tissues, but more abundant in testis.

It is found in the cytoplasm. It carries out the reaction D-mannose 6-phosphate = D-fructose 6-phosphate. Its pathway is nucleotide-sugar biosynthesis; GDP-alpha-D-mannose biosynthesis; alpha-D-mannose 1-phosphate from D-fructose 6-phosphate: step 1/2. Functionally, isomerase that catalyzes the interconversion of fructose-6-P and mannose-6-P and has a critical role in the supply of D-mannose derivatives required for many eukaryotic glycosylation reactions. The polypeptide is Mannose-6-phosphate isomerase (Mus musculus (Mouse)).